The sequence spans 315 residues: Microtubule-associated protein Jupiter (315 aa).

A compositionally biased stretch (polar residues) spans 1–14; the sequence is MISNFDCTDNQASS. Disordered regions lie at residues 1-37 and 51-89; these read MISNFDCTDNQASSKVLRPPGGGSSDIFGSEMPQTPR and EKDNGVKNNGDAPRRGQKTVDSHSRLFGEPTRPITPGKN. Ser24 carries the phosphoserine modification. Thr35 carries the post-translational modification Phosphothreonine. Basic and acidic residues predominate over residues 62 to 76; the sequence is APRRGQKTVDSHSRL. Thr81 and Thr85 each carry phosphothreonine. A phosphoserine mark is found at Ser94, Ser122, and Ser133. Disordered stretches follow at residues 116–166 and 272–315; these read YNGK…ADDA and EGNP…SGLW. Over residues 120 to 133 the composition is skewed to low complexity; it reads SGSVSSASSSVSSS. 2 stretches are compositionally biased toward polar residues: residues 134 to 148 and 285 to 296; these read TENLKMNSGSRSVFR and DFTQRQESSNGG.

Belongs to the MAP Jupiter family.

It localises to the nucleus. The protein resides in the cytoplasm. Its subcellular location is the cytoskeleton. It is found in the spindle. Functionally, binds to all microtubule populations. The sequence is that of Microtubule-associated protein Jupiter from Drosophila sechellia (Fruit fly).